The following is a 635-amino-acid chain: Rab11 family-interacting protein 4 (635 aa).

In terms of domain architecture, EF-hand spans 49 to 84; sequence GQGEEVEKLVKCLDPNDLGRINFKDFCRGVFAMKGC. Ca(2+)-binding residues include D62, N64, R68, and D73. The segment at 82-635 is necessary for interaction with RAB11A, subcellular location, homo- or heterooligomerization; the sequence is KGCEELLKDV…HNPSILEIKH (554 aa). 2 disordered regions span residues 147–176 and 216–258; these read GPQE…EKEP and EDYG…QTPR. Over residues 216–225 the composition is skewed to acidic residues; the sequence is EDYGEGDDVD. Residues 279–615 are a coiled coil; that stretch reads KINLLNDLEA…EEINFRLRQY (337 aa). The FIP-RBD domain occupies 572–634; the sequence is EAKNLFATQT…DHNPSILEIK (63 aa).

Homodimer. Forms a complex with Rab11 (RAB11A or RAB11B) and ARF6. Interacts with RAB11A; the interaction is direct. Forms a heterooligomeric complex with RAB11FIP2, RAB11FIP3 and RAB11FIP5. Interacts with ECPAS. As to expression, strongly expressed in the developing retina. Expressed predominantly in neural tissues.

It localises to the recycling endosome membrane. The protein localises to the cleavage furrow. It is found in the midbody. The protein resides in the cytoplasmic vesicle. Its function is as follows. Acts as a regulator of endocytic traffic by participating in membrane delivery. Required for the abscission step in cytokinesis, possibly by acting as an 'address tag' delivering recycling endosome membranes to the cleavage furrow during late cytokinesis. May play a role in differentiation during retinal development, in a Rab11-independent manner. The chain is Rab11 family-interacting protein 4 (Rab11fip4) from Mus musculus (Mouse).